The sequence spans 301 residues: GTPase Era (301 aa).

The Era-type G domain maps to 4 to 173; it reads KAGFVALIGK…LECISQHLSP (170 aa). The tract at residues 12–19 is G1; that stretch reads GKPNAGKS. Residue 12–19 coordinates GTP; that stretch reads GKPNAGKS. A G2 region spans residues 38 to 42; the sequence is NATRK. The tract at residues 64–67 is G3; it reads DTPG. GTP-binding positions include 64-68 and 122-125; these read DTPGL and SKID. Positions 122 to 125 are G4; it reads SKID. Residues 152 to 154 form a G5 region; the sequence is LSA. The KH type-2 domain maps to 204 to 280; that stretch reads LSDEIPYESD…FLNLQVIAQK (77 aa).

It belongs to the TRAFAC class TrmE-Era-EngA-EngB-Septin-like GTPase superfamily. Era GTPase family. As to quaternary structure, monomer.

It is found in the cytoplasm. Its subcellular location is the cell inner membrane. Its function is as follows. An essential GTPase that binds both GDP and GTP, with rapid nucleotide exchange. Plays a role in 16S rRNA processing and 30S ribosomal subunit biogenesis and possibly also in cell cycle regulation and energy metabolism. This Helicobacter pylori (strain ATCC 700392 / 26695) (Campylobacter pylori) protein is GTPase Era.